The sequence spans 344 residues: MADHWNKLTRPSSIKVVGGKEPCVMELVIEPLESGFALTLGNALRRVMMSSLRGFAVYGIEIEGASHELTALSGVREDVADLVLNLSMLRVKLLNSNQRVLRLVARGPGEVTAASIVDSADHVVLNKDLHICTLGKDVDFCMKIYVNSGKGYVPATEYRAASRSGGASEVGSGFIATNALYSPVKKVALKIESSRIGQFTDYDRLMLTVETDGSVAPDDAVAVAAKILQDQLQSFISFDEVEETRKSVDKEEGVLPYDHNLLRKVDELELSVRSHNCLKNDNITYIGDLVQRTESDMLRTPNFGRKSLNEINEVLASMNLHLGMKVPNWPPESIENLSKQYSED.

Positions 1-239 (MADHWNKLTR…DQLQSFISFD (239 aa)) are alpha N-terminal domain (alpha-NTD). The interval 254-344 (VLPYDHNLLR…ENLSKQYSED (91 aa)) is alpha C-terminal domain (alpha-CTD).

It belongs to the RNA polymerase alpha chain family. As to quaternary structure, homodimer. The RNAP catalytic core consists of 2 alpha, 1 beta, 1 beta' and 1 omega subunit. When a sigma factor is associated with the core the holoenzyme is formed, which can initiate transcription.

The catalysed reaction is RNA(n) + a ribonucleoside 5'-triphosphate = RNA(n+1) + diphosphate. In terms of biological role, DNA-dependent RNA polymerase catalyzes the transcription of DNA into RNA using the four ribonucleoside triphosphates as substrates. The protein is DNA-directed RNA polymerase subunit alpha of Anaplasma phagocytophilum (strain HZ).